We begin with the raw amino-acid sequence, 633 residues long: Polypeptide N-acetylgalactosaminyltransferase 3 (633 aa).

Topologically, residues 1–19 are cytoplasmic; the sequence is MAHLKRLVKLHIKRHYHRK. A helical; Signal-anchor for type II membrane protein transmembrane segment spans residues 20–37; it reads FWKLGAVIFFFLVVLILM. At 38–633 the chain is on the lumenal side; it reads QREVSVQYSK…LQKWIFSQND (596 aa). The tract at residues 112 to 145 is disordered; that stretch reads DRPPQDSNAPGASGKPFKITHLSPEEQKEKERGE. Residues 134-145 show a composition bias toward basic and acidic residues; it reads SPEEQKEKERGE. Positions 184–293 are catalytic subdomain A; it reads LPTTSVIIVF…YGWLEPLLAR (110 aa). Positions 277 and 279 each coordinate Mn(2+). N-linked (GlcNAc...) asparagine glycosylation occurs at asparagine 297. The segment at 356 to 418 is catalytic subdomain B; sequence PIKTPTFAGG…PCSVVGHVFR (63 aa). Histidine 415 is a Mn(2+) binding site. Asparagine 484 carries N-linked (GlcNAc...) asparagine glycosylation. In terms of domain architecture, Ricin B-type lectin spans 504 to 630; the sequence is VISGYIKSVG…TDLLQKWIFS (127 aa). The cysteines at positions 517 and 535 are disulfide-linked. UDP-N-acetyl-alpha-D-galactosamine contacts are provided by aspartate 519, glutamate 522, histidine 536, and asparagine 541. Cystine bridges form between cysteine 561-cysteine 574 and cysteine 605-cysteine 618.

The protein belongs to the glycosyltransferase 2 family. GalNAc-T subfamily. It depends on Mn(2+) as a cofactor. As to expression, highly expressed in the reproductive tract, principally in the testis and uterus, and to a lesser degree in the cervix with only trace levels in the ovary. Also expressed at high level in sublingual gland, stomach and colon, with more moderate amounts present in the submandibular and parotid gland as well as the kidney.

It is found in the golgi apparatus. The protein resides in the golgi stack membrane. The enzyme catalyses L-seryl-[protein] + UDP-N-acetyl-alpha-D-galactosamine = a 3-O-[N-acetyl-alpha-D-galactosaminyl]-L-seryl-[protein] + UDP + H(+). It catalyses the reaction L-threonyl-[protein] + UDP-N-acetyl-alpha-D-galactosamine = a 3-O-[N-acetyl-alpha-D-galactosaminyl]-L-threonyl-[protein] + UDP + H(+). The protein operates within protein modification; protein glycosylation. In terms of biological role, catalyzes the initial reaction in O-linked oligosaccharide biosynthesis, the transfer of an N-acetyl-D-galactosamine residue to a serine or threonine residue on the protein receptor. Has activity toward HIV envelope glycoprotein gp120. Has activity towards EA2, MUC2 and MUC5. Probably glycosylates fibronectin in vivo. Glycosylates FGF23. The protein is Polypeptide N-acetylgalactosaminyltransferase 3 (Galnt3) of Mus musculus (Mouse).